The following is a 461-amino-acid chain: Bifunctional protein GlmU (461 aa).

Residues 1-235 are pyrophosphorylase; sequence MTDTRKQRAA…EDDLIGCDSK (235 aa). Residues 13–16, Lys27, Gln80, 85–86, 108–110, Gly146, Glu161, and Asn176 each bind UDP-N-acetyl-alpha-D-glucosamine; these read LAAG, GT, and YGD. A Mg(2+)-binding site is contributed by Asp110. The tract at residues 236 to 256 is linker; that stretch reads ADLAEAEAIFQQKRRRALMEA. Residues 257–461 form an N-acetyltransferase region; the sequence is GVTMVAPETV…ARTTDQNKKG (205 aa). Residues Arg322 and Lys340 each coordinate UDP-N-acetyl-alpha-D-glucosamine. Catalysis depends on His352, which acts as the Proton acceptor. Tyr355 and Asn366 together coordinate UDP-N-acetyl-alpha-D-glucosamine. Acetyl-CoA contacts are provided by residues Ala369, 375–376, Ser394, Ser412, and Arg429; that span reads NY.

The protein in the N-terminal section; belongs to the N-acetylglucosamine-1-phosphate uridyltransferase family. In the C-terminal section; belongs to the transferase hexapeptide repeat family. In terms of assembly, homotrimer. The cofactor is Mg(2+).

The protein localises to the cytoplasm. The catalysed reaction is alpha-D-glucosamine 1-phosphate + acetyl-CoA = N-acetyl-alpha-D-glucosamine 1-phosphate + CoA + H(+). It carries out the reaction N-acetyl-alpha-D-glucosamine 1-phosphate + UTP + H(+) = UDP-N-acetyl-alpha-D-glucosamine + diphosphate. It functions in the pathway nucleotide-sugar biosynthesis; UDP-N-acetyl-alpha-D-glucosamine biosynthesis; N-acetyl-alpha-D-glucosamine 1-phosphate from alpha-D-glucosamine 6-phosphate (route II): step 2/2. The protein operates within nucleotide-sugar biosynthesis; UDP-N-acetyl-alpha-D-glucosamine biosynthesis; UDP-N-acetyl-alpha-D-glucosamine from N-acetyl-alpha-D-glucosamine 1-phosphate: step 1/1. Its pathway is bacterial outer membrane biogenesis; LPS lipid A biosynthesis. Catalyzes the last two sequential reactions in the de novo biosynthetic pathway for UDP-N-acetylglucosamine (UDP-GlcNAc). The C-terminal domain catalyzes the transfer of acetyl group from acetyl coenzyme A to glucosamine-1-phosphate (GlcN-1-P) to produce N-acetylglucosamine-1-phosphate (GlcNAc-1-P), which is converted into UDP-GlcNAc by the transfer of uridine 5-monophosphate (from uridine 5-triphosphate), a reaction catalyzed by the N-terminal domain. This is Bifunctional protein GlmU from Hyphomonas neptunium (strain ATCC 15444).